Here is a 224-residue protein sequence, read N- to C-terminus: tRNA (guanine-N(7)-)-methyltransferase (224 aa).

3 residues coordinate S-adenosyl-L-methionine: Glu54, Glu79, and Asp129. Asp129 is an active-site residue. Lys133 and Asp165 together coordinate substrate.

This sequence belongs to the class I-like SAM-binding methyltransferase superfamily. TrmB family.

The catalysed reaction is guanosine(46) in tRNA + S-adenosyl-L-methionine = N(7)-methylguanosine(46) in tRNA + S-adenosyl-L-homocysteine. Its pathway is tRNA modification; N(7)-methylguanine-tRNA biosynthesis. Its function is as follows. Catalyzes the formation of N(7)-methylguanine at position 46 (m7G46) in tRNA. The protein is tRNA (guanine-N(7)-)-methyltransferase of Chlamydia pneumoniae (Chlamydophila pneumoniae).